The chain runs to 89 residues: Small ribosomal subunit protein uS15 (89 aa).

This sequence belongs to the universal ribosomal protein uS15 family. Part of the 30S ribosomal subunit. Forms a bridge to the 50S subunit in the 70S ribosome, contacting the 23S rRNA.

Functionally, one of the primary rRNA binding proteins, it binds directly to 16S rRNA where it helps nucleate assembly of the platform of the 30S subunit by binding and bridging several RNA helices of the 16S rRNA. Its function is as follows. Forms an intersubunit bridge (bridge B4) with the 23S rRNA of the 50S subunit in the ribosome. In Magnetococcus marinus (strain ATCC BAA-1437 / JCM 17883 / MC-1), this protein is Small ribosomal subunit protein uS15.